The primary structure comprises 486 residues: ATP-dependent rRNA helicase RRP3 (486 aa).

Residues 1–58 (MNGAKRRKVAQDTPRNTKPVAQEKPARAEPKPSSDEESEEESATLEEPSAEETAVDAP) form a disordered region. Basic and acidic residues predominate over residues 24 to 34 (KPARAEPKPSS). Residues 35–54 (DEESEEESATLEEPSAEETA) are compositionally biased toward acidic residues. Positions 60–88 (KTFKDLGVNDALCEACEKLNYKYPTPIQE) match the Q motif motif. A Helicase ATP-binding domain is found at 91–262 (IPVALQGRDI…RASLRDPVKV (172 aa)). 104-111 (AETGSGKT) is an ATP binding site. A DEAD box motif is present at residues 210-213 (DEAD). Residues 286 to 434 (QKDVHLIYLI…EYPTEKEEVM (149 aa)) form the Helicase C-terminal domain. Composition is skewed to basic and acidic residues over residues 451-460 (MKSFTEERGK) and 476-486 (RGRDDMDREEG). The disordered stretch occupies residues 451–486 (MKSFTEERGKKGSTLKGGRGKKGGKRGRDDMDREEG).

It belongs to the DEAD box helicase family. DDX47/RRP3 subfamily. As to quaternary structure, interacts with the SSU processome.

Its subcellular location is the nucleus. The catalysed reaction is ATP + H2O = ADP + phosphate + H(+). In terms of biological role, ATP-dependent rRNA helicase required for pre-ribosomal RNA processing. Involved in the maturation of the 35S-pre-rRNA and to its cleavage to mature 18S rRNA. The polypeptide is ATP-dependent rRNA helicase RRP3 (Gibberella zeae (strain ATCC MYA-4620 / CBS 123657 / FGSC 9075 / NRRL 31084 / PH-1) (Wheat head blight fungus)).